Here is a 159-residue protein sequence, read N- to C-terminus: MSTKAIYPGTFDPITNGHIDIITRAASMFDRVILAIAASPSKKPMFDLEERVALATTALQHLPNVEVMGFSDLMANFARAQQANILIRGLRAVADFEYEMQLAHMNRHLMPELESVFLMPSKEWSFISSSLVKEVARHAGDVTHFLPANVHQALMEKLK.

Residue Thr-10 participates in substrate binding. Residues 10–11 (TF) and His-18 contribute to the ATP site. 3 residues coordinate substrate: Lys-42, Met-74, and Arg-88. ATP-binding positions include 89–91 (GLR), Glu-99, and 124–130 (WSFISSS).

This sequence belongs to the bacterial CoaD family. In terms of assembly, homohexamer. It depends on Mg(2+) as a cofactor.

Its subcellular location is the cytoplasm. The catalysed reaction is (R)-4'-phosphopantetheine + ATP + H(+) = 3'-dephospho-CoA + diphosphate. The protein operates within cofactor biosynthesis; coenzyme A biosynthesis; CoA from (R)-pantothenate: step 4/5. Its function is as follows. Reversibly transfers an adenylyl group from ATP to 4'-phosphopantetheine, yielding dephospho-CoA (dPCoA) and pyrophosphate. This Enterobacter sp. (strain 638) protein is Phosphopantetheine adenylyltransferase.